The chain runs to 718 residues: MPRKILVTNALPYANGDIHLGHLVGYIQGDIWVRYQRMRGNTVHYVCADDTHGTPVMLRAEKEGITPEALIGRVHGEHLRDFTDFGVAFDNYHSTHSVENRAYAEDVYTKLKAAELIDTRAIEQFYDPVKEMFLPDRFIKGECPKCGAADQYGDNCEACGAAYAPTELKNPHSAVSGAKPVLKTSEHYFFRLSDPRAVAFLREWTRGTNAAGTRRLQVEAANKMKEWLGDETVGDGGNTLSDWDISRDAPYFGFEIPGAPGKYFYVWLDAPIGYFASFRNLAEQRGDIAVDDFTDAVRAETAGTEMVHFIGKDILYFHALFWPAMLRFAGYRTPTQLCVNGFLTVDGAKMSKSRGTFITARSYVSRGLNPEWLRYYFATKSNGTMEDVDLSLDDMVAKVNSDLVGKYVNIASRCAGFIAKRFDGKLGASDPQATADFEAAFAAGTIAHAYEERDYGRALREIMRLADLANQYVNDHKPWELAKQEGQEAHLHVVCSTALTHFRDLTLYLKPVLPALAQKVEAFLAIDPLVWPQTWQPLPAAHTINPYAHLMTRVERKQIDALLEANRESLAPAAPAAKVASSQQRHAEKQQHEAQSAETAMPHISIDDFTKVDLRIARIVGAEHVEGADKLIRLRLDIGESENGQAKLRQVFAGIKSAYDPATLVGRLTVMVANLAPRKMKFGVSEGMVLAASSADDKSSGIYLLSPDTGAASGMRVK.

The 'HIGH' region signature appears at 12–22 (PYANGDIHLGH). The Zn(2+) site is built by Cys143, Cys146, Cys156, and Cys159. The 'KMSKS' region motif lies at 349–353 (KMSKS). ATP is bound at residue Lys352. The interval 573 to 599 (AAPAAKVASSQQRHAEKQQHEAQSAET) is disordered. Residues 608-718 (DFTKVDLRIA…TGAASGMRVK (111 aa)) form the tRNA-binding domain.

Belongs to the class-I aminoacyl-tRNA synthetase family. MetG type 1 subfamily. As to quaternary structure, homodimer. It depends on Zn(2+) as a cofactor.

The protein localises to the cytoplasm. It catalyses the reaction tRNA(Met) + L-methionine + ATP = L-methionyl-tRNA(Met) + AMP + diphosphate. Is required not only for elongation of protein synthesis but also for the initiation of all mRNA translation through initiator tRNA(fMet) aminoacylation. In Aromatoleum aromaticum (strain DSM 19018 / LMG 30748 / EbN1) (Azoarcus sp. (strain EbN1)), this protein is Methionine--tRNA ligase.